The following is a 267-amino-acid chain: E3 SUMO-protein ligase MMS21 (267 aa).

Residues aspartate 169 to glutamine 256 form an SP-RING-type zinc finger. The Zn(2+) site is built by cysteine 200, histidine 202, cysteine 221, and cysteine 226.

The protein belongs to the NSE2 family. In terms of assembly, component of the Smc5-Smc6 complex which consists of KRE29, NSE1, NSE2/MMS21, NSE3, NSE4, NSE5, SMC5 and SMC6.

The protein resides in the nucleus. The protein localises to the cytoplasm. Its pathway is protein modification; protein sumoylation. Its function is as follows. Acts as an E3 ligase mediating SUMO/Smt3 attachment to SMC5 and YKU70. Acts in a DNA repair pathway for removal of UV-induced DNA damage that is distinct from classical nucleotide excision repair and in repair of ionizing radiation damage. Functions in homologous recombination repair of DNA double strand breaks and in recovery of stalled replication forks. The chain is E3 SUMO-protein ligase MMS21 (MMS21) from Saccharomyces cerevisiae (strain ATCC 204508 / S288c) (Baker's yeast).